The chain runs to 332 residues: 5-dehydro-2-deoxygluconokinase (332 aa).

Belongs to the carbohydrate kinase PfkB family.

The enzyme catalyses 5-dehydro-2-deoxy-D-gluconate + ATP = 6-phospho-5-dehydro-2-deoxy-D-gluconate + ADP + H(+). It participates in polyol metabolism; myo-inositol degradation into acetyl-CoA; acetyl-CoA from myo-inositol: step 5/7. Its function is as follows. Catalyzes the phosphorylation of 5-dehydro-2-deoxy-D-gluconate (2-deoxy-5-keto-D-gluconate or DKG) to 6-phospho-5-dehydro-2-deoxy-D-gluconate (DKGP). This is 5-dehydro-2-deoxygluconokinase from Bacillus thuringiensis subsp. konkukian (strain 97-27).